Here is a 390-residue protein sequence, read N- to C-terminus: MTTTAVTHIASLVTNDPSLGNGTPLGLIQDAAVVIDGDRIVWTGESSKAPATDNVLDAAGRAVVPGFVDSHSHLVFAGDRTQEFNARMSGQPYRAGGIRTTVAATRAASDEELSANVARYLAEALRQGTTTFETKSGYGLTVEDEARALRIAGRHTDEVTYLGAHIVSPDYADDPAGYVDLVTGPMLEACAPHARWIDVFCEQGAFDGDQARAILTAGRAKGLHPRIHANQLTYGPGVQLAVELDAASADHCTHLTDADVDALGQGDTVATLLPGAEFSTRATWPDARRLLDAGATVALSTDCNPGSSFTSSVPFCIALAVRDMGMTPDEAIWSATAGGAAALRRTDIGRITPGARADLVLLDAPSHVHLAYRPGVPLVSAVWRSGQRVV.

Residues His71 and His73 each contribute to the Fe(3+) site. Zn(2+) contacts are provided by His71 and His73. Residues Arg80, Tyr138, and His165 each contribute to the 4-imidazolone-5-propanoate site. Residue Tyr138 participates in N-formimidoyl-L-glutamate binding. His228 is a Fe(3+) binding site. His228 contacts Zn(2+). Gln231 is a binding site for 4-imidazolone-5-propanoate. Asp302 lines the Fe(3+) pocket. Asp302 provides a ligand contact to Zn(2+). The N-formimidoyl-L-glutamate site is built by Asn304 and Gly306. Residue Ser307 participates in 4-imidazolone-5-propanoate binding.

It belongs to the metallo-dependent hydrolases superfamily. HutI family. Requires Zn(2+) as cofactor. It depends on Fe(3+) as a cofactor.

The protein resides in the cytoplasm. The enzyme catalyses 4-imidazolone-5-propanoate + H2O = N-formimidoyl-L-glutamate. Its pathway is amino-acid degradation; L-histidine degradation into L-glutamate; N-formimidoyl-L-glutamate from L-histidine: step 3/3. In terms of biological role, catalyzes the hydrolytic cleavage of the carbon-nitrogen bond in imidazolone-5-propanoate to yield N-formimidoyl-L-glutamate. It is the third step in the universal histidine degradation pathway. This is Imidazolonepropionase from Streptomyces griseus subsp. griseus (strain JCM 4626 / CBS 651.72 / NBRC 13350 / KCC S-0626 / ISP 5235).